A 318-amino-acid polypeptide reads, in one-letter code: NADH-ubiquinone oxidoreductase chain 1 (318 aa).

Transmembrane regions (helical) follow at residues 2-22 (FMIN…FLTL), 70-90 (MFII…IPLP), 100-120 (LGIL…LWSG), 147-167 (AIIL…TLII), 171-191 (YLWL…STLA), 217-237 (AGPF…MNIF), 253-273 (ELYS…FLWI), and 294-314 (LPLT…LSSI).

This sequence belongs to the complex I subunit 1 family. Core subunit of respiratory chain NADH dehydrogenase (Complex I) which is composed of 45 different subunits.

Its subcellular location is the mitochondrion inner membrane. It carries out the reaction a ubiquinone + NADH + 5 H(+)(in) = a ubiquinol + NAD(+) + 4 H(+)(out). Functionally, core subunit of the mitochondrial membrane respiratory chain NADH dehydrogenase (Complex I) which catalyzes electron transfer from NADH through the respiratory chain, using ubiquinone as an electron acceptor. Essential for the catalytic activity and assembly of complex I. This chain is NADH-ubiquinone oxidoreductase chain 1 (MT-ND1), found in Equus caballus (Horse).